Here is a 412-residue protein sequence, read N- to C-terminus: Tyrosine--tRNA ligase (412 aa).

The short motif at 50-59 is the 'HIGH' region element; it reads PTGTDIHLGH. The 'KMSKS' region motif lies at 244 to 248; sequence KMSKS. Residue Lys247 coordinates ATP. An S4 RNA-binding domain is found at 348–411; the sequence is VKFFYLLSSL…IGKKIIKRFE (64 aa).

Belongs to the class-I aminoacyl-tRNA synthetase family. TyrS type 2 subfamily. Homodimer.

Its subcellular location is the cytoplasm. It catalyses the reaction tRNA(Tyr) + L-tyrosine + ATP = L-tyrosyl-tRNA(Tyr) + AMP + diphosphate + H(+). In terms of biological role, catalyzes the attachment of tyrosine to tRNA(Tyr) in a two-step reaction: tyrosine is first activated by ATP to form Tyr-AMP and then transferred to the acceptor end of tRNA(Tyr). In Prochlorococcus marinus (strain MIT 9312), this protein is Tyrosine--tRNA ligase.